Consider the following 144-residue polypeptide: Interleukin-9 (144 aa).

The signal sequence occupies residues 1–18 (MLLAMVLTSALLLCSVAG). The residue at position 19 (Q19) is a Pyrrolidone carboxylic acid. N-linked (GlcNAc...) asparagine glycosylation is found at N50, N63, N78, and N114.

This sequence belongs to the IL-7/IL-9 family. Interacts with IL9R. Interacts with IL2RG.

Its subcellular location is the secreted. In terms of biological role, multifunctional cytokine secreted mainly by T-helper 2 lymphocytes and also mast cells or NKT cells that plays important roles in the immune response against parasites. Affects intestinal epithelial permeability and adaptive immunity. In addition, induces the differentiation of specific T-cell subsets such as IL-17 producing helper T-cells (TH17) and also proliferation and differentiation of mast cells. Mechanistically, exerts its biological effects through a receptor composed of IL9R subunit and a signal transducing subunit IL2RG. Receptor stimulation results in the rapid activation of JAK1 and JAK3 kinase activities leading to STAT1, STAT3 and STAT5-mediated transcriptional programs. Induction of differentiation genes seems to be mediated by STAT1 alone, while protection of cells from apoptosis depends on STAT3 and STAT5. The sequence is that of Interleukin-9 (IL9) from Homo sapiens (Human).